Consider the following 90-residue polypeptide: Acylphosphatase (90 aa).

Residues S5–N90 form the Acylphosphatase-like domain. Residues R20 and N38 contribute to the active site.

Belongs to the acylphosphatase family.

The catalysed reaction is an acyl phosphate + H2O = a carboxylate + phosphate + H(+). The protein is Acylphosphatase (acyP) of Aeromonas hydrophila subsp. hydrophila (strain ATCC 7966 / DSM 30187 / BCRC 13018 / CCUG 14551 / JCM 1027 / KCTC 2358 / NCIMB 9240 / NCTC 8049).